A 302-amino-acid chain; its full sequence is tRNA-cytidine(32) 2-sulfurtransferase (302 aa).

Residues 43–48 (SGGKDS) carry the PP-loop motif motif. The [4Fe-4S] cluster site is built by Cys118, Cys121, and Cys209.

The protein belongs to the TtcA family. Homodimer. The cofactor is Mg(2+). It depends on [4Fe-4S] cluster as a cofactor.

It localises to the cytoplasm. It catalyses the reaction cytidine(32) in tRNA + S-sulfanyl-L-cysteinyl-[cysteine desulfurase] + AH2 + ATP = 2-thiocytidine(32) in tRNA + L-cysteinyl-[cysteine desulfurase] + A + AMP + diphosphate + H(+). Its pathway is tRNA modification. Functionally, catalyzes the ATP-dependent 2-thiolation of cytidine in position 32 of tRNA, to form 2-thiocytidine (s(2)C32). The sulfur atoms are provided by the cysteine/cysteine desulfurase (IscS) system. In Polynucleobacter necessarius subsp. necessarius (strain STIR1), this protein is tRNA-cytidine(32) 2-sulfurtransferase.